We begin with the raw amino-acid sequence, 296 residues long: 33 kDa chaperonin (296 aa).

Disulfide bonds link cysteine 233–cysteine 235 and cysteine 267–cysteine 270.

This sequence belongs to the HSP33 family. In terms of processing, under oxidizing conditions two disulfide bonds are formed involving the reactive cysteines. Under reducing conditions zinc is bound to the reactive cysteines and the protein is inactive.

It localises to the cytoplasm. Redox regulated molecular chaperone. Protects both thermally unfolding and oxidatively damaged proteins from irreversible aggregation. Plays an important role in the bacterial defense system toward oxidative stress. The chain is 33 kDa chaperonin from Actinobacillus pleuropneumoniae serotype 5b (strain L20).